The chain runs to 228 residues: R-spondin-4 (228 aa).

The N-terminal stretch at 1–19 (MRAPLCLLLLLAHAVDMLA) is a signal peptide. Residue N34 is glycosylated (N-linked (GlcNAc...) asparagine). Intrachain disulfides connect C35–C41, C38–C47, C50–C69, C73–C88, C91–C98, C95–C104, C107–C118, C122–C135, C139–C181, C150–C157, and C190–C196. An FU repeat occupies 85 to 128 (ANRCKKCGATCESCFSQDFCIRCKRRFHLYKGKCLPSCPPGTLT). The TSP type-1 domain maps to 138–197 (ECEPSPWGSWSPCIHNGKTCGSGWGLETRVREAGPAKQEETASCRVLSESRKCPIKRLCP). Residues 193-228 (KRLCPGERNPRQKNRKDRRQRKDRKLERRPHQRGSQ) are disordered. Residues 203–228 (RQKNRKDRRQRKDRKLERRPHQRGSQ) are compositionally biased toward basic residues.

Belongs to the R-spondin family. Binds heparin. Interacts with LGR4, LGR5 and LGR6.

The protein resides in the secreted. Activator of the canonical Wnt signaling pathway by acting as a ligand for LGR4-6 receptors. Upon binding to LGR4-6 (LGR4, LGR5 or LGR6), LGR4-6 associate with phosphorylated LRP6 and frizzled receptors that are activated by extracellular Wnt receptors, triggering the canonical Wnt signaling pathway to increase expression of target genes. Also regulates the canonical Wnt/beta-catenin-dependent pathway and non-canonical Wnt signaling by acting as an inhibitor of ZNRF3, an important regulator of the Wnt signaling pathway. The polypeptide is R-spondin-4 (Rspo4) (Mus musculus (Mouse)).